The sequence spans 623 residues: Xaa-Pro aminopeptidase 1 (623 aa).

Arg77 provides a ligand contact to a peptide. N6-acetyllysine is present on Lys304. His395 serves as a coordination point for a peptide. Residues Asp415, Asp426, and His489 each contribute to the Mn(2+) site. Positions 489, 498, and 523 each coordinate a peptide. Mn(2+) contacts are provided by Glu523 and Glu537.

This sequence belongs to the peptidase M24B family. In terms of assembly, homodimer. The cofactor is Mn(2+).

It is found in the cytoplasm. The protein localises to the cytosol. The enzyme catalyses Release of any N-terminal amino acid, including proline, that is linked to proline, even from a dipeptide or tripeptide.. Metalloaminopeptidase that catalyzes the removal of a penultimate prolyl residue from the N-termini of peptides, such as Arg-Pro-Pro. Contributes to the degradation of bradykinin. This is Xaa-Pro aminopeptidase 1 (XPNPEP1) from Bos taurus (Bovine).